Consider the following 244-residue polypeptide: 2-C-methyl-D-erythritol 4-phosphate cytidylyltransferase (244 aa).

This sequence belongs to the IspD/TarI cytidylyltransferase family. IspD subfamily.

The catalysed reaction is 2-C-methyl-D-erythritol 4-phosphate + CTP + H(+) = 4-CDP-2-C-methyl-D-erythritol + diphosphate. Its pathway is isoprenoid biosynthesis; isopentenyl diphosphate biosynthesis via DXP pathway; isopentenyl diphosphate from 1-deoxy-D-xylulose 5-phosphate: step 2/6. Its function is as follows. Catalyzes the formation of 4-diphosphocytidyl-2-C-methyl-D-erythritol from CTP and 2-C-methyl-D-erythritol 4-phosphate (MEP). The polypeptide is 2-C-methyl-D-erythritol 4-phosphate cytidylyltransferase (Prosthecochloris aestuarii (strain DSM 271 / SK 413)).